A 202-amino-acid chain; its full sequence is UDP-N-acetylglucosamine transferase subunit ALG13 (202 aa).

The protein belongs to the glycosyltransferase 28 family. As to quaternary structure, heterodimer with ALG14 to form a functional enzyme.

It localises to the endoplasmic reticulum. It catalyses the reaction an N-acetyl-alpha-D-glucosaminyl-diphospho-di-trans,poly-cis-dolichol + UDP-N-acetyl-alpha-D-glucosamine = an N,N'-diacetylchitobiosyl-diphospho-di-trans,poly-cis-dolichol + UDP + H(+). Functionally, involved in protein N-glycosylation. Essential for the second step of the dolichol-linked oligosaccharide pathway. In Saccharomyces cerevisiae (strain ATCC 204508 / S288c) (Baker's yeast), this protein is UDP-N-acetylglucosamine transferase subunit ALG13 (ALG13).